Here is a 104-residue protein sequence, read N- to C-terminus: Flagellar hook-basal body complex protein FliE (104 aa).

Belongs to the FliE family.

It is found in the bacterial flagellum basal body. The chain is Flagellar hook-basal body complex protein FliE from Edwardsiella ictaluri (strain 93-146).